Here is a 437-residue protein sequence, read N- to C-terminus: Isthmin-2 (437 aa).

Residues 1–25 (MLRARKGLWVLLSVLLAFWIERAIS) form the signal peptide. Residues 156-191 (DSGEDGTGQAEDEEDDYDYDSGEPIPSGLGKTDGDW) form a disordered region. Positions 165 to 176 (AEDEEDDYDYDS) are enriched in acidic residues. The 46-residue stretch at 197–242 (EEKEEEWSTWSPCSVTCGHGNQTRSRSCGDFCTSTESQSCDLVPCP) folds into the TSP type-1 domain. 3 cysteine pairs are disulfide-bonded: Cys209–Cys236, Cys213–Cys241, and Cys224–Cys228. Asn217 carries N-linked (GlcNAc...) asparagine glycosylation. N-linked (GlcNAc...) asparagine glycans are attached at residues Asn258 and Asn349. An AMOP domain is found at 262–425 (PYGTDVGSCE…LHCMENPQQD (164 aa)).

It belongs to the isthmin family.

It is found in the secreted. This chain is Isthmin-2 (ism2), found in Danio rerio (Zebrafish).